The following is a 395-amino-acid chain: Phosphoglycerate kinase (395 aa).

Substrate is bound by residues 21–23 (DLN), R36, 59–62 (HLGR), R113, and R146. ATP-binding positions include K197, E324, and 350-353 (GGDT).

It belongs to the phosphoglycerate kinase family. In terms of assembly, monomer.

It localises to the cytoplasm. The catalysed reaction is (2R)-3-phosphoglycerate + ATP = (2R)-3-phospho-glyceroyl phosphate + ADP. Its pathway is carbohydrate degradation; glycolysis; pyruvate from D-glyceraldehyde 3-phosphate: step 2/5. The chain is Phosphoglycerate kinase from Acinetobacter baumannii (strain ATCC 17978 / DSM 105126 / CIP 53.77 / LMG 1025 / NCDC KC755 / 5377).